Here is a 292-residue protein sequence, read N- to C-terminus: 4-hydroxybenzoate solanesyltransferase (292 aa).

The next 9 helical transmembrane spans lie at L28–L48, P49–N69, V97–T117, P118–K138, V140–W160, W172–A192, V217–L237, P239–L259, and I272–L292.

Belongs to the UbiA prenyltransferase family. The cofactor is Mg(2+).

The protein localises to the cell inner membrane. The enzyme catalyses all-trans-nonaprenyl diphosphate + 4-hydroxybenzoate = 4-hydroxy-3-(all-trans-nonaprenyl)benzoate + diphosphate. Its function is as follows. Catalyzes the prenylation of para-hydroxybenzoate (PHB) with an all-trans polyprenyl group. Mediates the second step in the final reaction sequence of plastoquinone-9 (PQ-9) biosynthesis, which is the condensation of the polyisoprenoid side chain with PHB, generating the first membrane-bound Q intermediate 4-hydroxy-3-solanesylbenzoate. The chain is 4-hydroxybenzoate solanesyltransferase from Synechocystis sp. (strain ATCC 27184 / PCC 6803 / Kazusa).